The sequence spans 113 residues: N(2)-fixation sustaining protein CowN (113 aa).

It belongs to the CowN family.

Functionally, is required to sustain N(2)-dependent growth in the presence of low levels of carbon monoxide (CO). Probably acts by protecting the N(2) fixation ability of the nitrogenase complex, which is inactivated in the presence of CO. The sequence is that of N(2)-fixation sustaining protein CowN from Azoarcus sp. (strain BH72).